The following is a 590-amino-acid chain: Beta-fructofuranosidase, insoluble isoenzyme 4 (590 aa).

An N-terminal signal peptide occupies residues Met1–Ser28. Residues Trp71–Asp74 and Gln90 each bind substrate. Asp74 is a catalytic residue. N-linked (GlcNAc...) asparagine glycosylation is present at Asn94. Residues Trp98 and Trp133–Thr134 contribute to the substrate site. Asn167 carries an N-linked (GlcNAc...) asparagine glycan. Arg198–Asp199 is a substrate binding site. Residue Asn247 is glycosylated (N-linked (GlcNAc...) asparagine). Substrate contacts are provided by Glu253 and Asp287. An N-linked (GlcNAc...) asparagine glycan is attached at Asn345. An intrachain disulfide couples Cys445 to Cys491. N-linked (GlcNAc...) asparagine glycosylation is present at Asn565.

The protein belongs to the glycosyl hydrolase 32 family. In terms of tissue distribution, expressed in leaves. Expressed at moderate levels in roots and flowers, and weakly in seeds.

It localises to the secreted. The protein resides in the extracellular space. It is found in the apoplast. Its subcellular location is the cell wall. It carries out the reaction Hydrolysis of terminal non-reducing beta-D-fructofuranoside residues in beta-D-fructofuranosides.. In terms of biological role, may play a role in sucrose partitioning during seed development and in stress response. This is Beta-fructofuranosidase, insoluble isoenzyme 4 (CIN4) from Oryza sativa subsp. japonica (Rice).